Reading from the N-terminus, the 308-residue chain is Ribonuclease Z (308 aa).

Zn(2+)-binding residues include H63, H65, D67, H68, H140, D211, and H269. D67 functions as the Proton acceptor in the catalytic mechanism.

It belongs to the RNase Z family. In terms of assembly, homodimer. It depends on Zn(2+) as a cofactor.

It catalyses the reaction Endonucleolytic cleavage of RNA, removing extra 3' nucleotides from tRNA precursor, generating 3' termini of tRNAs. A 3'-hydroxy group is left at the tRNA terminus and a 5'-phosphoryl group is left at the trailer molecule.. In terms of biological role, zinc phosphodiesterase, which displays some tRNA 3'-processing endonuclease activity. Probably involved in tRNA maturation, by removing a 3'-trailer from precursor tRNA. The protein is Ribonuclease Z of Bacillus velezensis (strain DSM 23117 / BGSC 10A6 / LMG 26770 / FZB42) (Bacillus amyloliquefaciens subsp. plantarum).